A 155-amino-acid polypeptide reads, in one-letter code: Endoribonuclease YbeY (155 aa).

Zn(2+) is bound by residues His-116, His-120, and His-126.

The protein belongs to the endoribonuclease YbeY family. The cofactor is Zn(2+).

Its subcellular location is the cytoplasm. Single strand-specific metallo-endoribonuclease involved in late-stage 70S ribosome quality control and in maturation of the 3' terminus of the 16S rRNA. In Thermobifida fusca (strain YX), this protein is Endoribonuclease YbeY.